The primary structure comprises 264 residues: Thymidylate synthase (264 aa).

Residue Arg21 participates in dUMP binding. His51 lines the (6R)-5,10-methylene-5,6,7,8-tetrahydrofolate pocket. A dUMP-binding site is contributed by Arg126 to Arg127. Residue Cys146 is the Nucleophile of the active site. Residues Arg166–Asp169, Asn177, and His207–Tyr209 contribute to the dUMP site. Asp169 contacts (6R)-5,10-methylene-5,6,7,8-tetrahydrofolate. Ala263 serves as a coordination point for (6R)-5,10-methylene-5,6,7,8-tetrahydrofolate.

This sequence belongs to the thymidylate synthase family. Bacterial-type ThyA subfamily. Homodimer.

It is found in the cytoplasm. The enzyme catalyses dUMP + (6R)-5,10-methylene-5,6,7,8-tetrahydrofolate = 7,8-dihydrofolate + dTMP. It participates in pyrimidine metabolism; dTTP biosynthesis. Its function is as follows. Catalyzes the reductive methylation of 2'-deoxyuridine-5'-monophosphate (dUMP) to 2'-deoxythymidine-5'-monophosphate (dTMP) while utilizing 5,10-methylenetetrahydrofolate (mTHF) as the methyl donor and reductant in the reaction, yielding dihydrofolate (DHF) as a by-product. This enzymatic reaction provides an intracellular de novo source of dTMP, an essential precursor for DNA biosynthesis. This Geobacillus thermodenitrificans (strain NG80-2) protein is Thymidylate synthase.